A 382-amino-acid polypeptide reads, in one-letter code: D-galactonate dehydratase (382 aa).

Position 183 (aspartate 183) interacts with Mg(2+). Histidine 185 serves as the catalytic Proton donor. Residues glutamate 209 and glutamate 235 each contribute to the Mg(2+) site. Catalysis depends on histidine 285, which acts as the Proton acceptor.

This sequence belongs to the mandelate racemase/muconate lactonizing enzyme family. GalD subfamily. Mg(2+) serves as cofactor.

It carries out the reaction D-galactonate = 2-dehydro-3-deoxy-D-galactonate + H2O. Its pathway is carbohydrate acid metabolism; D-galactonate degradation; D-glyceraldehyde 3-phosphate and pyruvate from D-galactonate: step 1/3. Its function is as follows. Catalyzes the dehydration of D-galactonate to 2-keto-3-deoxy-D-galactonate. This Escherichia coli O9:H4 (strain HS) protein is D-galactonate dehydratase.